The following is a 170-amino-acid chain: Fimbrial protein (170 aa).

Residues 1-7 (MNTLQKG) constitute a propeptide, leader sequence. Phe-8 bears the N-methylphenylalanine mark. A helical membrane pass occupies residues 8–28 (FTLIELMIVIAIVGILAAVAL). O-linked (Gal...) serine glycosylation is present at Ser-70. Ser-100 carries the O-(sn-1-glycerophosphoryl)serine modification. A disulfide bridge links Cys-127 with Cys-163.

It belongs to the N-Me-Phe pilin family. As to quaternary structure, the pili are polar flexible filaments of about 5.4 nanometers diameter and 2.5 micrometers average length; they consist of only a single polypeptide chain arranged in a helical configuration of five subunits per turn in the assembled pilus. O-linked glycan has been reported to consist either of the Gal(alpha1-3) GlcNAc disaccharide, or the Gal(beta 1-4) Gal(alpha 1-3) 2,4-diacetamido-2,4,6-trideoxyhexose trisaccharide.

The protein localises to the fimbrium. It localises to the membrane. Its function is as follows. Major component of the type IV pilus (T4P) that plays a role in cellular adherence, microcolony formation as well as twitching motility. The protein is Fimbrial protein (pilE) of Neisseria meningitidis serogroup B (strain ATCC BAA-335 / MC58).